A 205-amino-acid polypeptide reads, in one-letter code: Small heat shock protein hspG12 (205 aa).

A sHSP domain is found at 35 to 205; that stretch reads KTIIDILPPM…YSNTIKININ (171 aa). A disordered region spans residues 99 to 147; sequence PSLLDTKEDEASIEEFDEDDIKPKSTETTSTLSNSKENKKDENKSKSTE. The segment covering 109 to 118 has biased composition (acidic residues); sequence ASIEEFDEDD. Residues 134–147 are compositionally biased toward basic and acidic residues; the sequence is KENKKDENKSKSTE.

The protein belongs to the small heat shock protein (HSP20) family.

The chain is Small heat shock protein hspG12 (hspG12) from Dictyostelium discoideum (Social amoeba).